A 266-amino-acid polypeptide reads, in one-letter code: GTP cyclohydrolase FolE2 1 (266 aa).

This sequence belongs to the GTP cyclohydrolase IV family.

It carries out the reaction GTP + H2O = 7,8-dihydroneopterin 3'-triphosphate + formate + H(+). The protein operates within cofactor biosynthesis; 7,8-dihydroneopterin triphosphate biosynthesis; 7,8-dihydroneopterin triphosphate from GTP: step 1/1. Functionally, converts GTP to 7,8-dihydroneopterin triphosphate. The chain is GTP cyclohydrolase FolE2 1 from Dechloromonas aromatica (strain RCB).